The primary structure comprises 473 residues: MSQLLTPRQAEELHKSIIAYFLSAKLPKSAAALREEIADSVQLDDSTAKKYEGLLEKKWTSVVRLQKKIMDLEARNSALQSELDSATPTSLSRRNQDPVSWLPRAPARHRLESHRNPVTSVAFHPVFSSLASGSEDTTIKIWDWELGELERTIKGHTRAVVDVDYGGPHGGTLLASCSSDLTIKLWDPSDEYKNIRTLPGHDHSVSAVRFIPSGAAGSPLSGNLLVSASRDKTLRIWDVTTGYCVRTLHGHVEWVRDVVPSPDGRFLFSAGDDRVARLWDVSSGETKSTFLGHEHFIECVALAPPTTYPYLAALAGLKKPPPPSSSAEYVATGSRDKTIRVWDSRGTLIKTLIGHDNWVRALVFHPGGKYLLSVSDDKTIRCWDLSQEFKCVRVVTDAHAFVTCIRWAPNIIKDAGGMGVNGDINGGGSLALSGVNGIIPGSKKEDPGGGAKLGIRCVIATGSVDLNVRVFAS.

Residues 9–41 form the LisH domain; it reads QAEELHKSIIAYFLSAKLPKSAAALREEIADSV. Positions 60-87 form a coiled coil; the sequence is TSVVRLQKKIMDLEARNSALQSELDSAT. Residues 80 to 93 show a composition bias toward polar residues; the sequence is QSELDSATPTSLSR. Positions 80 to 99 are disordered; sequence QSELDSATPTSLSRRNQDPV. WD repeat units follow at residues 113-154, 156-196, 200-247, 250-289, 292-352, 354-393, 397-434, and 435-472; these read SHRN…RTIK, HTRA…KNIR, GHDH…CVRT, GHVE…TKST, GHEH…IKTL, GHDN…KCVR, DAHA…ALSG, and VNGI…RVFA.

Belongs to the WD repeat LIS1/nudF family. As to quaternary structure, self-associates. Interacts with NDL1 and dynein.

It is found in the cytoplasm. It localises to the cytoskeleton. The protein resides in the spindle pole. Its function is as follows. Positively regulates the activity of the minus-end directed microtubule motor protein dynein. May enhance dynein-mediated microtubule sliding by targeting dynein to the microtubule plus end. Required for nuclear migration during vegetative growth as well as development. Required for retrograde early endosome (EE) transport from the hyphal tip. Required for localization of dynein to the mitotic spindle poles. Recruits additional proteins to the dynein complex at SPBs. This is Nuclear distribution protein PAC1 from Ajellomyces dermatitidis (strain ER-3 / ATCC MYA-2586) (Blastomyces dermatitidis).